The following is a 322-amino-acid chain: tRNA U34 carboxymethyltransferase (322 aa).

Residues Lys-90, Trp-104, Lys-109, Gly-129, 151-153, 180-181, Met-196, Tyr-200, and Arg-315 each bind carboxy-S-adenosyl-L-methionine; these read DPS and IE.

The protein belongs to the class I-like SAM-binding methyltransferase superfamily. CmoB family. In terms of assembly, homotetramer.

It carries out the reaction carboxy-S-adenosyl-L-methionine + 5-hydroxyuridine(34) in tRNA = 5-carboxymethoxyuridine(34) in tRNA + S-adenosyl-L-homocysteine + H(+). In terms of biological role, catalyzes carboxymethyl transfer from carboxy-S-adenosyl-L-methionine (Cx-SAM) to 5-hydroxyuridine (ho5U) to form 5-carboxymethoxyuridine (cmo5U) at position 34 in tRNAs. The protein is tRNA U34 carboxymethyltransferase of Cellvibrio japonicus (strain Ueda107) (Pseudomonas fluorescens subsp. cellulosa).